The following is a 309-amino-acid chain: UPF0282 protein Msed_0584 (309 aa).

The protein belongs to the UPF0282 family.

The protein is UPF0282 protein Msed_0584 of Metallosphaera sedula (strain ATCC 51363 / DSM 5348 / JCM 9185 / NBRC 15509 / TH2).